Consider the following 138-residue polypeptide: ATP synthase epsilon chain (138 aa).

The protein belongs to the ATPase epsilon chain family. As to quaternary structure, F-type ATPases have 2 components, CF(1) - the catalytic core - and CF(0) - the membrane proton channel. CF(1) has five subunits: alpha(3), beta(3), gamma(1), delta(1), epsilon(1). CF(0) has three main subunits: a, b and c.

It localises to the cell inner membrane. Functionally, produces ATP from ADP in the presence of a proton gradient across the membrane. This is ATP synthase epsilon chain from Polaromonas naphthalenivorans (strain CJ2).